The following is a 352-amino-acid chain: Phosphate acyltransferase (352 aa).

The segment covering 328–339 (ESFPGDAREREG) has biased composition (basic and acidic residues). Residues 328–352 (ESFPGDAREREGAPAPDAGTERVAS) are disordered.

The protein belongs to the PlsX family. As to quaternary structure, homodimer. Probably interacts with PlsY.

Its subcellular location is the cytoplasm. The catalysed reaction is a fatty acyl-[ACP] + phosphate = an acyl phosphate + holo-[ACP]. The protein operates within lipid metabolism; phospholipid metabolism. Its function is as follows. Catalyzes the reversible formation of acyl-phosphate (acyl-PO(4)) from acyl-[acyl-carrier-protein] (acyl-ACP). This enzyme utilizes acyl-ACP as fatty acyl donor, but not acyl-CoA. The chain is Phosphate acyltransferase from Citrifermentans bemidjiense (strain ATCC BAA-1014 / DSM 16622 / JCM 12645 / Bem) (Geobacter bemidjiensis).